A 332-amino-acid chain; its full sequence is Formamidase (332 aa).

The 246-residue stretch at 14–259 (FLTALIQYPV…WEIVTAEVYP (246 aa)) folds into the CN hydrolase domain. The active-site Proton acceptor is the Glu-60. The active-site Proton donor is the Lys-132. Cys-165 acts as the Nucleophile in catalysis.

This sequence belongs to the carbon-nitrogen hydrolase superfamily. Aliphatic amidase family.

The enzyme catalyses formamide + H2O = formate + NH4(+). Functionally, is an aliphatic amidase with a restricted substrate specificity, as it only hydrolyzes formamide. This chain is Formamidase, found in Bacillus cereus (strain B4264).